The following is a 481-amino-acid chain: Anti-sigma-I factor RsgI5 (481 aa).

Residues 1–50 (MKHKGIVLKLTKSKAIISTNDFQCYYIKRSPTIYVGKEVEFTNKDIVTKK) are Cytoplasmic-facing. In terms of domain architecture, RsgI N-terminal anti-sigma spans 3 to 50 (HKGIVLKLTKSKAIISTNDFQCYYIKRSPTIYVGKEVEFTNKDIVTKK). The chain crosses the membrane as a helical span at residues 51–71 (SVLIKPALSVACFILLIACVL). The Extracellular segment spans residues 72–481 (SLSKIINNIS…DATFIGIKVD (410 aa)). The tract at residues 255–339 (ASEERNPEES…TPTPTPTPAD (85 aa)) is disordered. Residues 256–265 (SEERNPEESP) are compositionally biased toward basic and acidic residues. Low complexity-rich tracts occupy residues 266-283 (KMTP…TPTD) and 291-315 (NTPT…TSTP). The span at 316–336 (APKPTSTPTPTLMPTPTPTPT) shows a compositional bias: pro residues.

In terms of assembly, interacts (via RsgI N-terminal anti-sigma domain) with SigI5.

The protein resides in the cell membrane. Its function is as follows. Anti-sigma factor for SigI5. Negatively regulates SigI5 activity through direct interaction. Binding of the polysaccharide substrate to the extracellular C-terminal sensing domain of RsgI5 may induce a conformational change in its N-terminal cytoplasmic region, leading to the release and activation of SigI5. The chain is Anti-sigma-I factor RsgI5 from Acetivibrio thermocellus (strain ATCC 27405 / DSM 1237 / JCM 9322 / NBRC 103400 / NCIMB 10682 / NRRL B-4536 / VPI 7372) (Clostridium thermocellum).